A 155-amino-acid chain; its full sequence is 1,4-dihydroxy-2-naphthoyl-CoA hydrolase (155 aa).

Residue D22 is part of the active site.

It belongs to the 4-hydroxybenzoyl-CoA thioesterase family. DHNA-CoA hydrolase subfamily.

The catalysed reaction is 1,4-dihydroxy-2-naphthoyl-CoA + H2O = 1,4-dihydroxy-2-naphthoate + CoA + H(+). It participates in cofactor biosynthesis; phylloquinone biosynthesis. Its pathway is quinol/quinone metabolism; 1,4-dihydroxy-2-naphthoate biosynthesis; 1,4-dihydroxy-2-naphthoate from chorismate: step 7/7. Catalyzes the hydrolysis of 1,4-dihydroxy-2-naphthoyl-CoA (DHNA-CoA) to 1,4-dihydroxy-2-naphthoate (DHNA), a reaction involved in phylloquinone (vitamin K1) biosynthesis. This is 1,4-dihydroxy-2-naphthoyl-CoA hydrolase from Prochlorococcus marinus (strain SARG / CCMP1375 / SS120).